We begin with the raw amino-acid sequence, 192 residues long: Cytidylate kinase (192 aa).

An ATP-binding site is contributed by 7-15 (GPPGAGKST).

It belongs to the cytidylate kinase family. Type 2 subfamily.

It localises to the cytoplasm. The enzyme catalyses CMP + ATP = CDP + ADP. The catalysed reaction is dCMP + ATP = dCDP + ADP. The sequence is that of Cytidylate kinase from Haloquadratum walsbyi (strain DSM 16790 / HBSQ001).